The sequence spans 118 residues: ATP synthase subunit g, mitochondrial (118 aa).

This sequence belongs to the ATPase g subunit family. As to quaternary structure, F-type ATPases have 2 components, CF(1) - the catalytic core - and CF(0) - the membrane proton channel.

It localises to the mitochondrion membrane. Functionally, mitochondrial membrane ATP synthase (F(1)F(0) ATP synthase or Complex V) produces ATP from ADP in the presence of a proton gradient across the membrane which is generated by electron transport complexes of the respiratory chain. F-type ATPases consist of two structural domains, F(1) - containing the extramembraneous catalytic core, and F(0) - containing the membrane proton channel, linked together by a central stalk and a peripheral stalk. During catalysis, ATP synthesis in the catalytic domain of F(1) is coupled via a rotary mechanism of the central stalk subunits to proton translocation. Part of the complex F(0) domain. Minor subunit located with subunit a in the membrane. The polypeptide is ATP synthase subunit g, mitochondrial (atp20) (Schizosaccharomyces pombe (strain 972 / ATCC 24843) (Fission yeast)).